Consider the following 312-residue polypeptide: Pantothenate kinase (312 aa).

97–104 is a binding site for ATP; it reads GSVAVGKS.

The protein belongs to the prokaryotic pantothenate kinase family.

The protein resides in the cytoplasm. It catalyses the reaction (R)-pantothenate + ATP = (R)-4'-phosphopantothenate + ADP + H(+). Its pathway is cofactor biosynthesis; coenzyme A biosynthesis; CoA from (R)-pantothenate: step 1/5. This Mycobacterium sp. (strain JLS) protein is Pantothenate kinase.